A 351-amino-acid chain; its full sequence is Porphobilinogen deaminase (351 aa).

Position 242 is an S-(dipyrrolylmethanemethyl)cysteine (Cys-242).

It belongs to the HMBS family. In terms of assembly, monomer. Dipyrromethane serves as cofactor.

The enzyme catalyses 4 porphobilinogen + H2O = hydroxymethylbilane + 4 NH4(+). It participates in porphyrin-containing compound metabolism; protoporphyrin-IX biosynthesis; coproporphyrinogen-III from 5-aminolevulinate: step 2/4. Its function is as follows. Tetrapolymerization of the monopyrrole PBG into the hydroxymethylbilane pre-uroporphyrinogen in several discrete steps. The polypeptide is Porphobilinogen deaminase (Rickettsia rickettsii (strain Sheila Smith)).